Consider the following 174-residue polypeptide: Gamma-crystallin C (174 aa).

Beta/gamma crystallin 'Greek key' domains are found at residues 2-40 (GKITLYEDKAFQGRSYESTTDCPNLQTYLSRCNSIRVES) and 41-83 (GCWM…CLIP). Cys-23 is modified (S-methylcysteine). The segment at 84 to 87 (QTGS) is connecting peptide. Beta/gamma crystallin 'Greek key' domains are found at residues 88–128 (HRLR…HVLE) and 129–171 (GCWV…RRVV).

It belongs to the beta/gamma-crystallin family. As to quaternary structure, monomer.

Crystallins are the dominant structural components of the vertebrate eye lens. The sequence is that of Gamma-crystallin C (CRYGC) from Macaca mulatta (Rhesus macaque).